The sequence spans 277 residues: Nickel transport system permease protein NikC (277 aa).

Residues 1–12 (MNFFLSSRWSVR) lie on the Cytoplasmic side of the membrane. A helical membrane pass occupies residues 13-33 (LALIIIALLALIALTSQWWLP). Residues 34–78 (YDPQAIDLPSRLLSPDAQHWLGTDHLGRDIFSRLMAATRVSLGSV) lie on the Periplasmic side of the membrane. The ABC transmembrane type-1 domain occupies 67–260 (LMAATRVSLG…ISVMAFNLVG (194 aa)). A helical membrane pass occupies residues 79-99 (MACLLLVLTLGLVIGGSAGLI). The Cytoplasmic segment spans residues 100–120 (GGRVDQATMRVADMFMTFPTS). A helical membrane pass occupies residues 121–141 (ILSFFMVGVLGTGLTNVIIAI). Residues 142–183 (ALSHWAWYARMVRSLVISLRQREFVLASRLSGAGHVRVFVDH) are Periplasmic-facing. Residues 184–204 (LAGAVIPSLLVLATLDIGHMM) form a helical membrane-spanning segment. Over 205–207 (LHV) the chain is Cytoplasmic. A helical transmembrane segment spans residues 208 to 228 (AGMSFLGLGVTAPTAEWGVMI). Residues 229–239 (NDARQYIWTQP) are Periplasmic-facing. The chain crosses the membrane as a helical span at residues 240-260 (LQMFWPGLALFISVMAFNLVG). Over 261–277 (DALRDHLDPHLVTEHAH) the chain is Cytoplasmic.

The protein belongs to the binding-protein-dependent transport system permease family. OppBC subfamily. As to quaternary structure, probably forms a heterodimeric pore with NikB.

The protein resides in the cell inner membrane. Its function is as follows. Involved in a nickel transport system, probably translocates nickel through the bacterial inner membrane. The polypeptide is Nickel transport system permease protein NikC (nikC) (Escherichia coli O157:H7).